Here is an 80-residue protein sequence, read N- to C-terminus: Metallothionein-like protein 2B (80 aa).

This sequence belongs to the metallothionein superfamily. Type 15 family. In terms of tissue distribution, highly expressed in stems. Expressed in leaves and rachis.

Functionally, metallothioneins have a high content of cysteine residues that bind various heavy metals. The polypeptide is Metallothionein-like protein 2B (MT2B) (Oryza sativa subsp. japonica (Rice)).